Consider the following 375-residue polypeptide: Histidine biosynthesis bifunctional protein HisB (375 aa).

Positions 1–168 (MTPILFVDRD…GIAHELADAP (168 aa)) are histidinol-phosphatase. The active-site Nucleophile is Asp8. Mg(2+)-binding residues include Asp8, Asp10, and Asp128. Residue Asp10 is the Proton donor of the active site. Residues 169-375 (RRAVVQRNTK…TALPSTKGAL (207 aa)) are imidazoleglycerol-phosphate dehydratase.

The protein in the N-terminal section; belongs to the histidinol-phosphatase family. It in the C-terminal section; belongs to the imidazoleglycerol-phosphate dehydratase family. The cofactor is Mg(2+).

The protein localises to the cytoplasm. The enzyme catalyses D-erythro-1-(imidazol-4-yl)glycerol 3-phosphate = 3-(imidazol-4-yl)-2-oxopropyl phosphate + H2O. It carries out the reaction L-histidinol phosphate + H2O = L-histidinol + phosphate. It participates in amino-acid biosynthesis; L-histidine biosynthesis; L-histidine from 5-phospho-alpha-D-ribose 1-diphosphate: step 6/9. The protein operates within amino-acid biosynthesis; L-histidine biosynthesis; L-histidine from 5-phospho-alpha-D-ribose 1-diphosphate: step 8/9. The protein is Histidine biosynthesis bifunctional protein HisB of Xanthomonas campestris pv. campestris (strain 8004).